An 807-amino-acid polypeptide reads, in one-letter code: Glycerol-3-phosphate acyltransferase (807 aa).

The HXXXXD motif signature appears at C305–M310.

It belongs to the GPAT/DAPAT family.

Its subcellular location is the cell inner membrane. It catalyses the reaction sn-glycerol 3-phosphate + an acyl-CoA = a 1-acyl-sn-glycero-3-phosphate + CoA. The protein operates within phospholipid metabolism; CDP-diacylglycerol biosynthesis; CDP-diacylglycerol from sn-glycerol 3-phosphate: step 1/3. The chain is Glycerol-3-phosphate acyltransferase from Vibrio atlanticus (strain LGP32) (Vibrio splendidus (strain Mel32)).